A 532-amino-acid chain; its full sequence is MVLGVWITLWRLVRLLLLLCVLPWAEGGKVLVVPMDGSPWLSLREVVRDVHARGHQVLVLGPEVTMHIKGEDFFTLQTYATPYSKEEFDQLMQRNYQMIFKPQHSLKTLLETMENLKKFSMLCSRSCWELLHNKPLIKHLNESSFDVVLTDPLDLCGALLAKYLSVPSVFLLRFILCDLDFEGTQCPNPSSYIPRMLTMNSDHMSFLQRVKNMLYPLMMKYTCHISYDPYASLASELFQREVSLVDILSHASVWLFREDFVLDYPRPIMPNMVFIGGINCANRKPLSQEFEAYVNASGEHGIVVFSLGSMVSEIPEKKAMEIADALGKIPQTVLWRYTGSRPSNLAKNTYLVKWLPQNVLLGHPKTRAFITHSGSHGIYEGICNGVPMVMLPLFGDQMDNAKRIETRGAGVTLNVLEMTSDDLANALKTVINDKSYKENIMRLSSLHKDRPVEPLDLAVFWVEFVMRHKGAAPRPAAHDLTWYQYHSLDVIGFLLAIVLTVAFVTFKCCAFAWGKCFGKKGRVKKAHKSKVH.

Residues 1–27 (MVLGVWITLWRLVRLLLLLCVLPWAEG) form the signal peptide. Asn141 and Asn295 each carry an N-linked (GlcNAc...) asparagine glycan. Residues 490–506 (VIGFLLAIVLTVAFVTF) form a helical membrane-spanning segment.

This sequence belongs to the UDP-glycosyltransferase family. As to quaternary structure, homodimers. Homooligomer. Interacts with UGT1A1, UGT1A3, UGT1A6, UGT1A7, UGT1A8, UGT1A9 and UGT1A10 to form heterodimers.

It localises to the endoplasmic reticulum membrane. It catalyses the reaction glucuronate acceptor + UDP-alpha-D-glucuronate = acceptor beta-D-glucuronoside + UDP + H(+). The catalysed reaction is calcidiol + UDP-alpha-D-glucuronate = calcidiol 25-O-(beta-D-glucuronide) + UDP + H(+). The enzyme catalyses calcidiol + UDP-alpha-D-glucuronate = calcidiol 3-O-(beta-D-glucuronide) + UDP + H(+). It carries out the reaction calcitriol + UDP-alpha-D-glucuronate = calcitriol 25-O-(beta-D-glucuronide) + UDP + H(+). It catalyses the reaction (5Z,8Z,11Z,14Z)-eicosatetraenoate + UDP-alpha-D-glucuronate = O-[(5Z),(8Z),(11Z),(14Z)-eicosatetraenoyl]-beta-D-glucuronate + UDP. The catalysed reaction is 15-hydroxy-(5Z,8Z,11Z,13E)-eicosatetraenoate + UDP-alpha-D-glucuronate = 15-O-(beta-D-glucuronosyl)-(5Z,8Z,11Z,14Z)-eicosatetraenoate + UDP + H(+). The enzyme catalyses 20-hydroxy-(5Z,8Z,11Z,14Z)-eicosatetraenoate + UDP-alpha-D-glucuronate = 20-O-(beta-D-glucuronosyl)-(5Z,8Z,11Z,14Z)-eicosatetraenoate + UDP + H(+). In terms of biological role, UDP-glucuronosyltransferase (UGT) that catalyzes phase II biotransformation reactions in which lipophilic substrates are conjugated with glucuronic acid to increase the metabolite's water solubility, thereby facilitating excretion into either the urine or bile. Essential for the elimination and detoxification of drugs, xenobiotics and endogenous compounds. Involved in the glucuronidation of calcidiol, which is the major circulating form of vitamin D3 essential for the regulation of calcium and phosphate homeostasis. Also glucuronidates the biologically active form of vitamin D3, calcitriol, probably leading to its biliary transport and intestinal reabsorption. Involved in the glucuronidation of arachidonic acid (AA) and AA-derived eicosanoids including 15-HETE, 20-HETE and PGB1. In Oryctolagus cuniculus (Rabbit), this protein is UDP-glucuronosyltransferase 1A4 (Ugt1a4).